The chain runs to 173 residues: Small ribosomal subunit protein uS5 (173 aa).

An S5 DRBM domain is found at 17-80 (WQERVIQIRR…SDAKKHVVDV (64 aa)).

This sequence belongs to the universal ribosomal protein uS5 family. As to quaternary structure, part of the 30S ribosomal subunit. Contacts proteins S4 and S8.

With S4 and S12 plays an important role in translational accuracy. In terms of biological role, located at the back of the 30S subunit body where it stabilizes the conformation of the head with respect to the body. The polypeptide is Small ribosomal subunit protein uS5 (Picosynechococcus sp. (strain ATCC 27264 / PCC 7002 / PR-6) (Agmenellum quadruplicatum)).